An 803-amino-acid chain; its full sequence is Translation initiation factor IF-2 (803 aa).

Disordered regions lie at residues 95 to 125 (PVVEQKRETEPAPTQEVPLTSDTTNLNEKAE) and 138 to 178 (EVKE…EREE). Over residues 111-121 (VPLTSDTTNLN) the composition is skewed to polar residues. Residues 138–155 (EVKEEAKKTPSEKKETPK) show a composition bias toward basic and acidic residues. Residues 156 to 167 (KGPRKETRRSRK) show a composition bias toward basic residues. Positions 168–178 (PDKEDKWEREE) are enriched in basic and acidic residues. The tr-type G domain maps to 302–471 (PRAPVVTIMG…LLQAEVLELK (170 aa)). The tract at residues 311-318 (GHVDHGKT) is G1. 311 to 318 (GHVDHGKT) contributes to the GTP binding site. The segment at 336–340 (GITQH) is G2. A G3 region spans residues 357-360 (DTPG). Residues 357-361 (DTPGH) and 411-414 (NKID) each bind GTP. The G4 stretch occupies residues 411–414 (NKID). Positions 447–449 (SAK) are G5.

This sequence belongs to the TRAFAC class translation factor GTPase superfamily. Classic translation factor GTPase family. IF-2 subfamily.

The protein resides in the cytoplasm. One of the essential components for the initiation of protein synthesis. Protects formylmethionyl-tRNA from spontaneous hydrolysis and promotes its binding to the 30S ribosomal subunits. Also involved in the hydrolysis of GTP during the formation of the 70S ribosomal complex. The protein is Translation initiation factor IF-2 of Coxiella burnetii (strain Dugway 5J108-111).